The sequence spans 66 residues: uncharacterized protein (66 aa).

2 helical membrane passes run 4 to 24 (ALFIAGQTYLWLNLTHLLLIF) and 38 to 58 (LLTPTVPCPTLLGIDFLILVL).

The protein resides in the membrane. This is an uncharacterized protein from Saccharomyces cerevisiae (strain ATCC 204508 / S288c) (Baker's yeast).